The following is a 371-amino-acid chain: Leucine-rich repeat-containing protein 58 (371 aa).

S24 carries the post-translational modification Phosphoserine. LRR repeat units follow at residues 45 to 66 (ALLR…LGSG), 69 to 91 (HLQL…LALR), 92 to 113 (GLRT…PKGL), 121 to 143 (SLQV…LELR), 144 to 166 (ALQT…ENLQ), 167 to 189 (SLEC…GNLP), 190 to 211 (SLNY…LSQL), 213 to 234 (SLRS…ILNL), and 236 to 256 (HLEE…RDLT). The span at 340 to 351 (SSASHSSTSQSE) shows a compositional bias: low complexity. A disordered region spans residues 340-361 (SSASHSSTSQSESDSEDEASVA).

The chain is Leucine-rich repeat-containing protein 58 (LRRC58) from Homo sapiens (Human).